The chain runs to 443 residues: Thymidine phosphorylase (443 aa).

The protein belongs to the thymidine/pyrimidine-nucleoside phosphorylase family. In terms of assembly, homodimer.

The enzyme catalyses thymidine + phosphate = 2-deoxy-alpha-D-ribose 1-phosphate + thymine. It participates in pyrimidine metabolism; dTMP biosynthesis via salvage pathway; dTMP from thymine: step 1/2. Functionally, the enzymes which catalyze the reversible phosphorolysis of pyrimidine nucleosides are involved in the degradation of these compounds and in their utilization as carbon and energy sources, or in the rescue of pyrimidine bases for nucleotide synthesis. This is Thymidine phosphorylase from Aeromonas salmonicida (strain A449).